The sequence spans 151 residues: UPF0208 membrane protein SG1605 (151 aa).

2 helical membrane-spanning segments follow: residues 46-64 (FGVRFMPAVAVFTLTWQIA) and 70-90 (GPAVATAIFACSLPMQGLWWL).

It belongs to the UPF0208 family.

The protein localises to the cell inner membrane. The sequence is that of UPF0208 membrane protein SG1605 from Sodalis glossinidius (strain morsitans).